The sequence spans 530 residues: Bifunctional purine biosynthesis protein PurH (530 aa).

Residues 1-148 (MNNPRPIRRA…KNHKDVTIVV (148 aa)) enclose the MGS-like domain.

The protein belongs to the PurH family.

It carries out the reaction (6R)-10-formyltetrahydrofolate + 5-amino-1-(5-phospho-beta-D-ribosyl)imidazole-4-carboxamide = 5-formamido-1-(5-phospho-D-ribosyl)imidazole-4-carboxamide + (6S)-5,6,7,8-tetrahydrofolate. It catalyses the reaction IMP + H2O = 5-formamido-1-(5-phospho-D-ribosyl)imidazole-4-carboxamide. It functions in the pathway purine metabolism; IMP biosynthesis via de novo pathway; 5-formamido-1-(5-phospho-D-ribosyl)imidazole-4-carboxamide from 5-amino-1-(5-phospho-D-ribosyl)imidazole-4-carboxamide (10-formyl THF route): step 1/1. Its pathway is purine metabolism; IMP biosynthesis via de novo pathway; IMP from 5-formamido-1-(5-phospho-D-ribosyl)imidazole-4-carboxamide: step 1/1. This is Bifunctional purine biosynthesis protein PurH from Aliivibrio salmonicida (strain LFI1238) (Vibrio salmonicida (strain LFI1238)).